A 212-amino-acid polypeptide reads, in one-letter code: NAD(P)H-hydrate epimerase (212 aa).

The YjeF N-terminal domain occupies 10-212 (MRSLERAAIA…IGVIVKPIGL (203 aa)). Position 65–69 (65–69 (NNGGD)) interacts with (6S)-NADPHX. 2 residues coordinate K(+): Asn-66 and Asp-129. (6S)-NADPHX contacts are provided by residues 133 to 139 (GLGLTRP) and Asp-161. Ser-164 is a binding site for K(+).

It belongs to the NnrE/AIBP family. Requires K(+) as cofactor.

The enzyme catalyses (6R)-NADHX = (6S)-NADHX. The catalysed reaction is (6R)-NADPHX = (6S)-NADPHX. Its function is as follows. Catalyzes the epimerization of the S- and R-forms of NAD(P)HX, a damaged form of NAD(P)H that is a result of enzymatic or heat-dependent hydration. This is a prerequisite for the S-specific NAD(P)H-hydrate dehydratase to allow the repair of both epimers of NAD(P)HX. The protein is NAD(P)H-hydrate epimerase of Rhodobacter capsulatus (strain ATCC BAA-309 / NBRC 16581 / SB1003).